The primary structure comprises 252 residues: ATP synthase subunit a (252 aa).

6 helical membrane-spanning segments follow: residues phenylalanine 29–isoleucine 49, phenylalanine 87–phenylalanine 107, glutamine 116–phenylalanine 136, leucine 146–isoleucine 166, methionine 183–isoleucine 205, and valine 219–leucine 239.

The protein belongs to the ATPase A chain family. As to quaternary structure, F-type ATPases have 2 components, CF(1) - the catalytic core - and CF(0) - the membrane proton channel. CF(1) has five subunits: alpha(3), beta(3), gamma(1), delta(1), epsilon(1). CF(0) has three main subunits: a(1), b(2) and c(9-12). The alpha and beta chains form an alternating ring which encloses part of the gamma chain. CF(1) is attached to CF(0) by a central stalk formed by the gamma and epsilon chains, while a peripheral stalk is formed by the delta and b chains.

The protein localises to the cell inner membrane. Key component of the proton channel; it plays a direct role in the translocation of protons across the membrane. The sequence is that of ATP synthase subunit a from Bartonella quintana (strain Toulouse) (Rochalimaea quintana).